A 394-amino-acid polypeptide reads, in one-letter code: Elongation factor Tu (394 aa).

The tr-type G domain occupies 10-204 (KPHVNIGTIG…AVDSYIPQPV (195 aa)). Positions 19 to 26 (GHVDHGKT) are G1. 19 to 26 (GHVDHGKT) lines the GTP pocket. Residue T26 participates in Mg(2+) binding. The tract at residues 60–64 (GITIS) is G2. The interval 81 to 84 (DCPG) is G3. GTP-binding positions include 81 to 85 (DCPGH) and 136 to 139 (NKVD). A G4 region spans residues 136 to 139 (NKVD). Residues 174–176 (SAL) form a G5 region.

Belongs to the TRAFAC class translation factor GTPase superfamily. Classic translation factor GTPase family. EF-Tu/EF-1A subfamily. As to quaternary structure, monomer.

It is found in the cytoplasm. It catalyses the reaction GTP + H2O = GDP + phosphate + H(+). Its function is as follows. GTP hydrolase that promotes the GTP-dependent binding of aminoacyl-tRNA to the A-site of ribosomes during protein biosynthesis. This chain is Elongation factor Tu, found in Rickettsia rhipicephali.